Consider the following 136-residue polypeptide: uncharacterized protein (136 aa).

The signal sequence occupies residues 1–19 (MKKLLMVILGIALIGMAYA).

This is an uncharacterized protein from Methanocaldococcus jannaschii (strain ATCC 43067 / DSM 2661 / JAL-1 / JCM 10045 / NBRC 100440) (Methanococcus jannaschii).